Consider the following 337-residue polypeptide: 25S rRNA (adenine(2142)-N(1))-methyltransferase (337 aa).

S-adenosyl-L-methionine is bound by residues Gly180 and Asp201.

This sequence belongs to the BMT2 family.

The protein resides in the nucleus. It localises to the nucleolus. The enzyme catalyses adenosine(2142) in 25S rRNA + S-adenosyl-L-methionine = N(1)-methyladenosine(2142) in 25S rRNA + S-adenosyl-L-homocysteine + H(+). Its function is as follows. S-adenosyl-L-methionine-dependent methyltransferase that specifically methylates the N(1) position of adenine 2142 in 25S rRNA. N(1)-methyladenine(2142) in 25S rRNA is present in helix 65, a region that accounts for most of the intersubunit surface of the large subunit. The polypeptide is 25S rRNA (adenine(2142)-N(1))-methyltransferase (Saccharomyces cerevisiae (strain ATCC 204508 / S288c) (Baker's yeast)).